A 222-amino-acid polypeptide reads, in one-letter code: Small ribosomal subunit protein uS3 (222 aa).

Positions 39-107 (IRKYIKTKFY…QININIAEIK (69 aa)) constitute a KH type-2 domain.

Belongs to the universal ribosomal protein uS3 family. In terms of assembly, part of the 30S ribosomal subunit. Forms a tight complex with proteins S10 and S14.

Its function is as follows. Binds the lower part of the 30S subunit head. Binds mRNA in the 70S ribosome, positioning it for translation. The protein is Small ribosomal subunit protein uS3 of Carboxydothermus hydrogenoformans (strain ATCC BAA-161 / DSM 6008 / Z-2901).